A 572-amino-acid chain; its full sequence is Proline--tRNA ligase (572 aa).

It belongs to the class-II aminoacyl-tRNA synthetase family. ProS type 1 subfamily. In terms of assembly, homodimer.

It localises to the cytoplasm. It carries out the reaction tRNA(Pro) + L-proline + ATP = L-prolyl-tRNA(Pro) + AMP + diphosphate. Its function is as follows. Catalyzes the attachment of proline to tRNA(Pro) in a two-step reaction: proline is first activated by ATP to form Pro-AMP and then transferred to the acceptor end of tRNA(Pro). As ProRS can inadvertently accommodate and process non-cognate amino acids such as alanine and cysteine, to avoid such errors it has two additional distinct editing activities against alanine. One activity is designated as 'pretransfer' editing and involves the tRNA(Pro)-independent hydrolysis of activated Ala-AMP. The other activity is designated 'posttransfer' editing and involves deacylation of mischarged Ala-tRNA(Pro). The misacylated Cys-tRNA(Pro) is not edited by ProRS. The sequence is that of Proline--tRNA ligase from Buchnera aphidicola subsp. Acyrthosiphon pisum (strain 5A).